A 591-amino-acid polypeptide reads, in one-letter code: ATP-dependent lipid A-core flippase (591 aa).

Helical transmembrane passes span 34–54 (LILA…LAVI), 71–91 (IWSV…CNFF), 158–178 (LVVI…TVII), 258–278 (LTPL…AVAL), and 285–305 (TLTA…FDPI). An ABC transmembrane type-1 domain is found at 35 to 317 (ILAVLLMAGA…LTNLASKMQK (283 aa)). The 237-residue stretch at 350 to 586 (IEFRQIGHRF…GGLYATLYNM (237 aa)) folds into the ABC transporter domain. 384–391 (GRSGSGKT) lines the ATP pocket.

This sequence belongs to the ABC transporter superfamily. Lipid exporter (TC 3.A.1.106) family. Homodimer.

The protein localises to the cell inner membrane. The enzyme catalyses ATP + H2O + lipid A-core oligosaccharideSide 1 = ADP + phosphate + lipid A-core oligosaccharideSide 2.. In terms of biological role, involved in lipopolysaccharide (LPS) biosynthesis. Translocates lipid A-core from the inner to the outer leaflet of the inner membrane. Transmembrane domains (TMD) form a pore in the inner membrane and the ATP-binding domain (NBD) is responsible for energy generation. The protein is ATP-dependent lipid A-core flippase of Bordetella avium (strain 197N).